We begin with the raw amino-acid sequence, 864 residues long: Mitochondrial 15S rRNA processing factor CCM1 (864 aa).

Residues 1-76 constitute a mitochondrion transit peptide; sequence MYMARCGPKN…REFSNTLKER (76 aa). Polar residues-rich tracts occupy residues 80-94 and 102-112; these read TKSVNSDGHQSNSIA and NVNVTKTSSVP. A disordered region spans residues 80–117; that stretch reads TKSVNSDGHQSNSIAPISEDSRNVNVTKTSSVPNEEKS. 2 PPR repeats span residues 319–353 and 356–390; these read NKQNLTTVIQFYSRKEMTKQAWNTFDTMKFLSTKH and DICTYNTMLRICEKERNFPKALDLFQEIQDHNIKP.

It belongs to the CCM1 family. In terms of assembly, binds to mitochondrial small subunit 15S rRNA.

It is found in the mitochondrion. Regulates mitochondrial small subunit maturation by controlling 15S rRNA 5'-end processing. Localizes to the 5' precursor of the 15S rRNA in a position that is subsequently occupied by mS47 in the mature yeast mtSSU. Uses structure and sequence-specific RNA recognition, binding to a single-stranded region of the precursor and specifically recognizing bases -6 to -1. The exchange of Ccm1 for mS47 is coupled to the irreversible removal of precursor rRNA that is accompanied by conformational changes of the mitoribosomal proteins uS5m and mS26. These conformational changes signal completion of 5'-end rRNA processing through protection of the mature 5'-end of the 15S rRNA and stabilization of mS47. The removal of the 5' precursor together with the dissociation of Ccm1 may be catalyzed by the 5'-3' exoribonuclease Pet127. Involved in the specific removal of group I introns in mitochondrial encoded transcripts. The chain is Mitochondrial 15S rRNA processing factor CCM1 from Saccharomyces cerevisiae (strain ATCC 204508 / S288c) (Baker's yeast).